The chain runs to 909 residues: Probable dipeptidyl-aminopeptidase B (909 aa).

Residues 1-63 (MRVGSRINDE…HNHNGRAQGN (63 aa)) are disordered. The Cytoplasmic portion of the chain corresponds to 1 to 94 (MRVGSRINDE…NGKSNQRRTL (94 aa)). The segment covering 27–38 (DSSSTASISLTL) has biased composition (low complexity). A helical; Signal-anchor for type II membrane protein membrane pass occupies residues 95-115 (IVFWLLVALCVGGWAVAFLFF). Residues 116–909 (VTSPGNKTST…YSNFLPIRSF (794 aa)) lie on the Vacuolar side of the membrane. A glycan (N-linked (GlcNAc...) asparagine) is linked at Asn-121. The span at 123 to 134 (TSTSPHSGSNSP) shows a compositional bias: polar residues. Residues 123–144 (TSTSPHSGSNSPEGDVTKPGIP) form a disordered region. 3 N-linked (GlcNAc...) asparagine glycosylation sites follow: Asn-207, Asn-303, and Asn-355. Catalysis depends on Ser-760, which acts as the Charge relay system. N-linked (GlcNAc...) asparagine glycosylation is found at Asn-814, Asn-819, and Asn-822. Residues Asp-837 and His-870 each act as charge relay system in the active site. N-linked (GlcNAc...) asparagine glycosylation is present at Asn-888.

The protein belongs to the peptidase S9B family.

Its subcellular location is the vacuole membrane. The enzyme catalyses Release of an N-terminal dipeptide, Xaa-Yaa-|-Zaa-, from a polypeptide, preferentially when Yaa is Pro, provided Zaa is neither Pro nor hydroxyproline.. Functionally, type IV dipeptidyl-peptidase which removes N-terminal dipeptides sequentially from polypeptides having unsubstituted N-termini provided that the penultimate residue is proline. This is Probable dipeptidyl-aminopeptidase B (DAPB) from Arthroderma benhamiae (strain ATCC MYA-4681 / CBS 112371) (Trichophyton mentagrophytes).